A 380-amino-acid polypeptide reads, in one-letter code: MEWEEESEAARQKAAAASASVVPAPFLTKTYQLVDDPATDHVVSWEDDDGGESASSFVVWRPPEFARDILPNYFKHSNFSSFVRQLNTYGFRKVVPERWEFANEFFRKGEKQLLCEIHRRKSAAATWPPFPPPPPPFFAPRHFAAGAFFRHGDGMLHGRLGALVTTTERRHWFESAALPVAPSSRLLSQLGPVIAPARRAAATPEEEALMQENHRLLRGNAALVQELAHMRKLYSDIIYFVQNHVRPVAPSPAAAAALHGLGVLRPPPAGGKAPASEVRGASGRSATSSSSLTVAEDQPTLLALRLPRTTEKIINEVSGGNGGGSTKLFGVHLSSADEQTSSGASRKRSPPQEQPPTSPAPKRTLVVEHSELRLSIVSPP.

The segment at 216–245 (LLRGNAALVQELAHMRKLYSDIIYFVQNHV) is hydrophobic repeat HR-A/B. Disordered stretches follow at residues 268 to 296 (PAGG…TVAE) and 314 to 380 (INEV…VSPP). Residues 278 to 296 (VRGASGRSATSSSSLTVAE) show a composition bias toward low complexity. Positions 346-348 (RKR) match the Nuclear localization signal motif.

It belongs to the HSF family. Class B subfamily. As to quaternary structure, homotrimer. Exhibits temperature-dependent phosphorylation.

It localises to the nucleus. Transcriptional regulator that specifically binds DNA of heat shock promoter elements (HSE). This is Putative heat stress transcription factor B-4a (HSFB4A) from Oryza sativa subsp. japonica (Rice).